Here is a 246-residue protein sequence, read N- to C-terminus: Ubiquinone biosynthesis O-methyltransferase (246 aa).

Residues Arg-36, Gly-60, Asp-81, and Leu-123 each contribute to the S-adenosyl-L-methionine site.

It belongs to the methyltransferase superfamily. UbiG/COQ3 family.

The catalysed reaction is a 3-demethylubiquinol + S-adenosyl-L-methionine = a ubiquinol + S-adenosyl-L-homocysteine + H(+). It catalyses the reaction a 3-(all-trans-polyprenyl)benzene-1,2-diol + S-adenosyl-L-methionine = a 2-methoxy-6-(all-trans-polyprenyl)phenol + S-adenosyl-L-homocysteine + H(+). It participates in cofactor biosynthesis; ubiquinone biosynthesis. O-methyltransferase that catalyzes the 2 O-methylation steps in the ubiquinone biosynthetic pathway. The polypeptide is Ubiquinone biosynthesis O-methyltransferase (Rickettsia typhi (strain ATCC VR-144 / Wilmington)).